The chain runs to 513 residues: GMP synthase [glutamine-hydrolyzing] (513 aa).

The 198-residue stretch at 3-200 (SVLVLDFGSQ…LITIAGITPD (198 aa)) folds into the Glutamine amidotransferase type-1 domain. The Nucleophile role is filled by C80. Catalysis depends on residues H174 and E176. In terms of domain architecture, GMPS ATP-PPase spans 201 to 388 (WSSKSFIEHQ…LGIAEDILMR (188 aa)). Residue 228–234 (SGGVDST) participates in ATP binding.

Homodimer.

It catalyses the reaction XMP + L-glutamine + ATP + H2O = GMP + L-glutamate + AMP + diphosphate + 2 H(+). The protein operates within purine metabolism; GMP biosynthesis; GMP from XMP (L-Gln route): step 1/1. Catalyzes the synthesis of GMP from XMP. The polypeptide is GMP synthase [glutamine-hydrolyzing] (Pelodictyon phaeoclathratiforme (strain DSM 5477 / BU-1)).